The primary structure comprises 760 residues: Transmembrane channel-like protein 1 (760 aa).

The interval 1 to 80 is disordered; the sequence is MSPKKVQIKV…RRRRLKRGAE (80 aa). Topologically, residues 1–182 are cytoplasmic; it reads MSPKKVQIKV…KIKAIESQFG (182 aa). Acidic residues predominate over residues 13–29; the sequence is KEDETEESSSEEEEEVE. The segment covering 30 to 39 has biased composition (basic and acidic residues); it reads DKLPRRESLR. Position 37 is a phosphoserine (Ser37). Thr45 bears the Phosphothreonine mark. Residues 50–61 show a composition bias toward acidic residues; it reads NEDDPEPEPEDE. Ser128 carries the post-translational modification Phosphoserine. The helical transmembrane segment at 183-220 threads the bilayer; it reads SSVASYFLFLRWMYGVNMVLFILTFSLIMLPEYLWGLP. Residues 221-271 lie on the Extracellular side of the membrane; it reads YGSLPRKTVPRAEEASAANFGVLYDFNGLAQYSVLFYGYYDNKRTIGWMNF. The helical transmembrane segment at 272–303 threads the bilayer; it reads RLPLSYFLVGIMCIGYSFLVVLKAMTKNIGDD. Topologically, residues 304 to 359 are cytoplasmic; it reads GGGDDNTFNFSWKVFTSWDYLIGNPETADNKFNSITMNFKEAITEEKAAQVEENVH. Ser314 carries the post-translational modification Phosphoserine. Residues 360 to 390 form a helical membrane-spanning segment; the sequence is LIRFLRFLANFFVFLTLGGSGYLIFWAVKRS. Topologically, residues 391–402 are extracellular; it reads QEFAQQDPDTLG. Thr400 is subject to Phosphothreonine. Residues 403–430 form a helical membrane-spanning segment; sequence WWEKNEMNMVMSLLGMFCPTLFDLFAEL. Topologically, residues 431–434 are cytoplasmic; the sequence is EDYH. The helical transmembrane segment at 435-469 threads the bilayer; that stretch reads PLIALKWLLGRIFALLLGNLYVFILALMDEINNKI. Over 470–515 the chain is Extracellular; sequence EEEKLVKANITLWEANMIKAYNASFSENSTGPPFFVHPADVPRGPC. A helical membrane pass occupies residues 516–553; the sequence is WETMVGQEFVRLTVSDVLTTYVTILIGDFLRACFVRFC. Topologically, residues 554-572 are cytoplasmic; the sequence is NYCWCWDLEYGYPSYTEFD. Residues 573–593 traverse the membrane as a helical segment; the sequence is ISGNVLALIFNQGMIWMGSFF. Residues 594-596 are Extracellular-facing; the sequence is APS. Residues 597-619 traverse the membrane as a helical segment; that stretch reads LPGINILRLHTSMYFQCWAVMCC. Topologically, residues 620–633 are cytoplasmic; sequence NVPEARVFKASRSN. Residues 634–657 traverse the membrane as a helical segment; it reads NFYLGMLLLILFLSTMPVLYMIVS. Residues 658-700 lie on the Extracellular side of the membrane; it reads LPPSFDCGPFSGKNRMFEVIGETLEHDFPSWMAKILRQLSNPG. The helical transmembrane segment at 701-734 threads the bilayer; that stretch reads LVIAVILVMVLAIYYLNATAKGQKAANLDLKKKM. The Cytoplasmic segment spans residues 735-760; sequence KMQALENKMRNKKMAAARAAAAAGRQ.

The protein belongs to the TMC family. As to quaternary structure, forms the MET channel complosed of TMC dimer (TMC1 or TMC2), TMIE, TOMT, CIB (CIB2 or CIB3), LHFPL5 and PDH15. The interaction of TMC1 and TMC2 with TOMT is required for the transportation of TMC1/2 into the stereocilia of hair cells. Interacts (via N-terminus) with both isoforms CD1 and CD3 of PCDH15. Can form a heterodimer with TMC2, TMC5 or TMC7. In terms of tissue distribution, detected in fetal cochlea, and at low levels in placenta and testis.

Its subcellular location is the cell membrane. The catalysed reaction is Ca(2+)(in) = Ca(2+)(out). Its function is as follows. Pore-forming subunit of the mechanotransducer (MET) non-selective cation channel complex located at the tips of stereocilia of cochlear hair cells and that mediates sensory transduction in the auditory system. The MET complex is composed of two dimeric pore-forming ion-conducting transmembrane TMC (TMC1 or TMC2) subunits, and aided by several auxiliary proteins including LHFPL5, TMIE, CIB2/3 and TOMT, and the tip-link PCDH15. MET channel is activated by tension in the tip-link extending from the side wall of one stereocilium to the tip of the adjacent shorter stereocilium, where the channel is located. TMC1 MET channel is highly permeable to calcium and likely transports monovalent cations. Also involved in vestibular hair cells transduction current. The polypeptide is Transmembrane channel-like protein 1 (Homo sapiens (Human)).